A 68-amino-acid chain; its full sequence is Phycobilisome 7.8 kDa linker polypeptide, allophycocyanin-associated, core (68 aa).

Residues 2 to 57 form the CpcD-like domain; that stretch reads ARLFKVTACVPSQTRIRTQRELQNTYFTKLVPFENWFREQQRIMKMGGKIVKVELA.

It belongs to the phycobilisome linker protein family.

Its subcellular location is the cellular thylakoid membrane. Its function is as follows. Rod linker protein, associated with allophycocyanin. Linker polypeptides determine the state of aggregation and the location of the disk-shaped phycobiliprotein units within the phycobilisome and modulate their spectroscopic properties in order to mediate a directed and optimal energy transfer. This is Phycobilisome 7.8 kDa linker polypeptide, allophycocyanin-associated, core (apcC) from Microchaete diplosiphon (Fremyella diplosiphon).